A 144-amino-acid polypeptide reads, in one-letter code: Large ribosomal subunit protein uL16 (144 aa).

It belongs to the universal ribosomal protein uL16 family. In terms of assembly, part of the 50S ribosomal subunit.

Its function is as follows. Binds 23S rRNA and is also seen to make contacts with the A and possibly P site tRNAs. This Bacillus pumilus (strain SAFR-032) protein is Large ribosomal subunit protein uL16.